Here is a 312-residue protein sequence, read N- to C-terminus: Protein-methionine-sulfoxide reductase catalytic subunit MsrP (312 aa).

Residues 1–45 (MPVYRPPRIAASEITPERFFLDRRSFLAAAGGLVLGGTGMAHAAA) constitute a signal peptide (tat-type signal). Mo-molybdopterin-binding positions include asparagine 69, 72–73 (YE), cysteine 126, threonine 161, asparagine 211, arginine 216, and 227–229 (GIK).

It belongs to the MsrP family. Heterodimer of a catalytic subunit (MsrP) and a heme-binding subunit (MsrQ). Mo-molybdopterin is required as a cofactor. Predicted to be exported by the Tat system. The position of the signal peptide cleavage has not been experimentally proven.

The protein localises to the periplasm. The catalysed reaction is L-methionyl-[protein] + a quinone + H2O = L-methionyl-(S)-S-oxide-[protein] + a quinol. It carries out the reaction L-methionyl-[protein] + a quinone + H2O = L-methionyl-(R)-S-oxide-[protein] + a quinol. Part of the MsrPQ system that repairs oxidized periplasmic proteins containing methionine sulfoxide residues (Met-O), using respiratory chain electrons. Thus protects these proteins from oxidative-stress damage caused by reactive species of oxygen and chlorine generated by the host defense mechanisms. MsrPQ is essential for the maintenance of envelope integrity under bleach stress, rescuing a wide series of structurally unrelated periplasmic proteins from methionine oxidation. The catalytic subunit MsrP is non-stereospecific, being able to reduce both (R-) and (S-) diastereoisomers of methionine sulfoxide. In Sinorhizobium fredii (strain NBRC 101917 / NGR234), this protein is Protein-methionine-sulfoxide reductase catalytic subunit MsrP.